A 136-amino-acid chain; its full sequence is Probable acyltransferase SID5 (136 aa).

Its pathway is siderophore biosynthesis. Functionally, probable acyltransferase; part of the gene cluster that mediates the biosynthesis of hydroxamate-containing siderophores that play a critical role in virulence via intracellular iron acquisition during macrophage infection. This chain is Probable acyltransferase SID5, found in Ajellomyces capsulatus (Darling's disease fungus).